Here is a 221-residue protein sequence, read N- to C-terminus: Ethylene-inducing xylanase 4 (221 aa).

The signal sequence occupies residues 1 to 19 (MVSFSTLLTACTAITGALG). A GH11 domain is found at 28-218 (NVTPNAQGTH…SAGRASVVVE (191 aa)). A glycan (N-linked (GlcNAc...) asparagine) is linked at asparagine 96. Catalysis depends on glutamate 114, which acts as the Nucleophile. Glutamate 205 serves as the catalytic Proton donor.

Belongs to the glycosyl hydrolase 11 (cellulase G) family.

The enzyme catalyses Endohydrolysis of (1-&gt;4)-beta-D-xylosidic linkages in xylans.. It participates in glycan degradation; xylan degradation. Its function is as follows. Endo-1,4-beta-xylanase involved in the hydrolysis of xylan, a major structural heterogeneous polysaccharide found in plant biomass representing the second most abundant polysaccharide in the biosphere, after cellulose. May act as an elicitor of plant defense responses in certain plants but does not exhibit any cell death when transiently expressed in N.benthamiana. This is Ethylene-inducing xylanase 4 from Verticillium dahliae (strain VdLs.17 / ATCC MYA-4575 / FGSC 10137) (Verticillium wilt).